The sequence spans 146 residues: Peptide methionine sulfoxide reductase MsrB (146 aa).

Residues 6-129 enclose the MsrB domain; the sequence is SAEAIAKLSA…NSASLRFVPK (124 aa). C118 functions as the Nucleophile in the catalytic mechanism.

It belongs to the MsrB Met sulfoxide reductase family.

It catalyses the reaction L-methionyl-[protein] + [thioredoxin]-disulfide + H2O = L-methionyl-(R)-S-oxide-[protein] + [thioredoxin]-dithiol. The chain is Peptide methionine sulfoxide reductase MsrB from Brucella melitensis biotype 1 (strain ATCC 23456 / CCUG 17765 / NCTC 10094 / 16M).